An 862-amino-acid polypeptide reads, in one-letter code: MSRPDGISGDRYNVKETEARWQQAWEAKRCFEAEIAPGKPKYYVLEMFPYPSGRIHMGHVRNYTLGDVVARYKRAKGFNVLHPMGWDAFGLPAENAAIQNNVHPAKWTRENIAAMREQLKSMGLSYDWRREVATCEPEYYRHEQKMFLDFLKAGLVYRKESWVNWDPVENTVLANEQVIDGRGWRSGALVEKRLLSQWFLKITAYAQDLLDSLATLERWPERVRLMQENWIGRSEGARLMFDLDGRSDRLEIFTTRPDTLFGAKFVAIAANHPLAAELAAGNPALAEFVAECNRMGTSEAAIETAEKKGFDTGLRAVHPFDSTWTLPIYVANFVLMDYGSGAIFGCPAHDQRDLDFANKYGLGWTQVVEPASDGQAVLAAIAKGEAYTGDGVAVNSQFLDGLAVDEAKAEAIRRIEEMGRGERTINYRLRDWGVSRQRYWGCPIPVIHCEACGTVPVPAEQLPVVLPEDVSFDKPGNPLDHHPTWKHVDCPCCGKPARRETDTFDTFFESSWYFARYTSPDRTDVAFDRVAADYWMSVDQYIGGIEHAVLHLLYSRFFTRALKDCGYLNVKEPFAGLLTQGMICHETYKSEDGAWLFPTEVVPGADGKLVHAETGAPVTGGRSEKMSKSKKNVVDPAGIIDGYGADTARLFMLSDSPPERDLDWTEAGIDGAWRYVNRLWRMVATAELPPAGAPMPELSPEAAKIRRLLHKTIAQVGEDLERFHFNKAVARIREMTNGLGELPAGDSGAAWVLREGLEATARLIGPMMPHLAEEMWLALGGSGLLAEAAWPEADPALLVEDSVTVAVQVNGKLRATIELPKDVDAALAEQTALAQPQVISAMSGKPARKVVVVPNRIVNVVV.

The 'HIGH' region motif lies at 49–59 (PYPSGRIHMGH). The 'KMSKS' region motif lies at 625 to 629 (KMSKS). ATP is bound at residue Lys-628.

Belongs to the class-I aminoacyl-tRNA synthetase family.

Its subcellular location is the cytoplasm. It catalyses the reaction tRNA(Leu) + L-leucine + ATP = L-leucyl-tRNA(Leu) + AMP + diphosphate. The sequence is that of Leucine--tRNA ligase from Paramagnetospirillum magneticum (strain ATCC 700264 / AMB-1) (Magnetospirillum magneticum).